The following is a 379-amino-acid chain: Botryococcene C-methyltransferase (379 aa).

The helical transmembrane segment at 17–37 (LLTWKGAAGLAAAVALGYIII) threads the bilayer.

It belongs to the class I-like SAM-binding methyltransferase superfamily. Erg6/SMT family.

It is found in the microsome membrane. It catalyses the reaction C30 botryococcene + 2 S-adenosyl-L-methionine = 3,20-dimethyl-1,2,21,22-tetradehydro-2,3,20,21-tetrahydrobotryococcene + 2 S-adenosyl-L-homocysteine + 2 H(+). In terms of biological role, converts botryococcene to mono- and dimethyl derivatives, but not to tri- and tetramethylated products. Unable to methylate cycloartenol, zymosterol or lanosterol, but can also use squalene as substrate. Methylates both C-3 and C22 positions, but only C-3 position in monomethylated squalenes. In contrast, monomethylated botryococcene occured mainly at the C-20 position yielding showacene, but also at the C-3 position yielding isoshowacene. The protein is Botryococcene C-methyltransferase (TMT-3) of Botryococcus braunii (Green alga).